The chain runs to 333 residues: Fructose-1,6-bisphosphatase class 1 (333 aa).

4 residues coordinate Mg(2+): glutamate 92, aspartate 113, leucine 115, and aspartate 116. Substrate contacts are provided by residues 116-119 (DGSS), asparagine 209, tyrosine 242, and lysine 272. Glutamate 278 is a binding site for Mg(2+).

It belongs to the FBPase class 1 family. As to quaternary structure, homotetramer. Mg(2+) is required as a cofactor.

The protein resides in the cytoplasm. The catalysed reaction is beta-D-fructose 1,6-bisphosphate + H2O = beta-D-fructose 6-phosphate + phosphate. It participates in carbohydrate biosynthesis; Calvin cycle. In Chlorobaculum parvum (strain DSM 263 / NCIMB 8327) (Chlorobium vibrioforme subsp. thiosulfatophilum), this protein is Fructose-1,6-bisphosphatase class 1.